Reading from the N-terminus, the 134-residue chain is Large ribosomal subunit protein bL19 (134 aa).

The disordered stretch occupies residues 108–134 (KSARIVERSDRSDKAKAQKAAAATAAE). Positions 111–123 (RIVERSDRSDKAK) are enriched in basic and acidic residues. The span at 125–134 (QKAAAATAAE) shows a compositional bias: low complexity.

This sequence belongs to the bacterial ribosomal protein bL19 family.

This protein is located at the 30S-50S ribosomal subunit interface and may play a role in the structure and function of the aminoacyl-tRNA binding site. The protein is Large ribosomal subunit protein bL19 of Methylorubrum extorquens (strain PA1) (Methylobacterium extorquens).